The following is a 125-amino-acid chain: Glutamyl-tRNA(Gln) amidotransferase subunit C, mitochondrial (125 aa).

Belongs to the GatC family. Subunit of the heterotrimeric GatCAB amidotransferase (AdT) complex, composed of A, B and C subunits.

The protein localises to the mitochondrion. The catalysed reaction is L-glutamyl-tRNA(Gln) + L-glutamine + ATP + H2O = L-glutaminyl-tRNA(Gln) + L-glutamate + ADP + phosphate + H(+). Its function is as follows. Allows the formation of correctly charged Gln-tRNA(Gln) through the transamidation of misacylated Glu-tRNA(Gln) in the mitochondria. The reaction takes place in the presence of glutamine and ATP through an activated gamma-phospho-Glu-tRNA(Gln). The polypeptide is Glutamyl-tRNA(Gln) amidotransferase subunit C, mitochondrial (Drosophila mojavensis (Fruit fly)).